We begin with the raw amino-acid sequence, 536 residues long: Light-independent protochlorophyllide reductase subunit B (536 aa).

Asp-36 contributes to the [4Fe-4S] cluster binding site. The active-site Proton donor is the Asp-292. Residue 427-428 coordinates substrate; that stretch reads GL. Residues 448 to 469 show a composition bias toward low complexity; it reads SHLGHLGGHQSQTEQQQSQAAT. A disordered region spans residues 448-489; sequence SHLGHLGGHQSQTEQQQSQAATNPSTQSNADSSSEESPLWTP. A compositionally biased stretch (polar residues) spans 470–483; sequence NPSTQSNADSSSEE.

Belongs to the ChlB/BchB/BchZ family. In terms of assembly, protochlorophyllide reductase is composed of three subunits; ChlL, ChlN and ChlB. Forms a heterotetramer of two ChlB and two ChlN subunits. The cofactor is [4Fe-4S] cluster.

The enzyme catalyses chlorophyllide a + oxidized 2[4Fe-4S]-[ferredoxin] + 2 ADP + 2 phosphate = protochlorophyllide a + reduced 2[4Fe-4S]-[ferredoxin] + 2 ATP + 2 H2O. It functions in the pathway porphyrin-containing compound metabolism; chlorophyll biosynthesis (light-independent). Component of the dark-operative protochlorophyllide reductase (DPOR) that uses Mg-ATP and reduced ferredoxin to reduce ring D of protochlorophyllide (Pchlide) to form chlorophyllide a (Chlide). This reaction is light-independent. The NB-protein (ChlN-ChlB) is the catalytic component of the complex. The protein is Light-independent protochlorophyllide reductase subunit B of Prochlorococcus marinus (strain MIT 9313).